The chain runs to 217 residues: Octanoyltransferase (217 aa).

Positions 34-216 (SETRDELWLL…AASRASRHDR (183 aa)) constitute a BPL/LPL catalytic domain. Residues 73–80 (RGGQVTWH), 140–142 (ALG), and 153–155 (GLS) each bind substrate. Cys171 (acyl-thioester intermediate) is an active-site residue.

It belongs to the LipB family.

It localises to the cytoplasm. It catalyses the reaction octanoyl-[ACP] + L-lysyl-[protein] = N(6)-octanoyl-L-lysyl-[protein] + holo-[ACP] + H(+). The protein operates within protein modification; protein lipoylation via endogenous pathway; protein N(6)-(lipoyl)lysine from octanoyl-[acyl-carrier-protein]: step 1/2. Catalyzes the transfer of endogenously produced octanoic acid from octanoyl-acyl-carrier-protein onto the lipoyl domains of lipoate-dependent enzymes. Lipoyl-ACP can also act as a substrate although octanoyl-ACP is likely to be the physiological substrate. The sequence is that of Octanoyltransferase from Halorhodospira halophila (strain DSM 244 / SL1) (Ectothiorhodospira halophila (strain DSM 244 / SL1)).